The primary structure comprises 397 residues: Polygalacturonase (397 aa).

Residues 1–22 (MGSYLGIYTILVLCLLGYSANA) form the signal peptide. PbH1 repeat units follow at residues 169-195 (GKNMTFDNIKIIAPAESPNTDGIHLGR), 196-217 (CEGVKILNTKIATGDDCISVGD), 219-239 (MKNLLIEKVVCGPGHGISVGS), and 249-270 (VTDITVKNCTLEGTSNGLRIKT). A glycan (N-linked (GlcNAc...) asparagine) is linked at N171. The active-site Proton donor is D210. Residues C212 and C229 are joined by a disulfide bond. H233 is a catalytic residue. N256 is a glycosylation site (N-linked (GlcNAc...) asparagine). 2 disulfide bridges follow: C341/C347 and C370/C386.

This sequence belongs to the glycosyl hydrolase 28 family. Pollen.

The protein resides in the secreted. It localises to the cell wall. It catalyses the reaction (1,4-alpha-D-galacturonosyl)n+m + H2O = (1,4-alpha-D-galacturonosyl)n + (1,4-alpha-D-galacturonosyl)m.. In terms of biological role, may function in depolymerizing pectin during pollen development, germination, and tube growth. The polypeptide is Polygalacturonase (Brassica napus (Rape)).